Here is a 622-residue protein sequence, read N- to C-terminus: Chaperone protein HscA homolog (622 aa).

This sequence belongs to the heat shock protein 70 family.

Functionally, chaperone involved in the maturation of iron-sulfur cluster-containing proteins. Has a low intrinsic ATPase activity which is markedly stimulated by HscB. In Burkholderia pseudomallei (strain K96243), this protein is Chaperone protein HscA homolog.